The sequence spans 216 residues: Somatotropin (216 aa).

An N-terminal signal peptide occupies residues 1–26; sequence MAADSQTSRLLTFTLLCLLWPQEAGA. H45 provides a ligand contact to Zn(2+). A disulfide bond links C78 and C189. S131 carries the post-translational modification Phosphoserine. E198 is a Zn(2+) binding site. Residues C206 and C214 are joined by a disulfide bond.

It belongs to the somatotropin/prolactin family.

The protein resides in the secreted. In terms of biological role, plays an important role in growth control. Its major role in stimulating body growth is to stimulate the liver and other tissues to secrete IGF1. It stimulates both the differentiation and proliferation of myoblasts. It also stimulates amino acid uptake and protein synthesis in muscle and other tissues. The sequence is that of Somatotropin (GH1) from Mesocricetus auratus (Golden hamster).